Consider the following 745-residue polypeptide: Capsid protein (745 aa).

Disordered regions lie at residues 23 to 44 (RRPLRRRRAGRPARRYRRRRTV), 598 to 619 (PCKTDGRPTDSDRHPRGIQVAD), and 660 to 700 (QPKR…EQAT). Composition is skewed to basic and acidic residues over residues 599-612 (CKTDGRPTDSDRHP) and 675-691 (GEFREPEKGSYSEEERS).

The protein belongs to the anelloviridae capsid protein family.

It is found in the virion. Functionally, self assemble to form an icosahedral capsid. The polypeptide is Capsid protein (Homo sapiens (Human)).